Here is a 144-residue protein sequence, read N- to C-terminus: Large ribosomal subunit protein uL13 (144 aa).

Belongs to the universal ribosomal protein uL13 family. Part of the 50S ribosomal subunit.

Its function is as follows. This protein is one of the early assembly proteins of the 50S ribosomal subunit, although it is not seen to bind rRNA by itself. It is important during the early stages of 50S assembly. In Pelotomaculum thermopropionicum (strain DSM 13744 / JCM 10971 / SI), this protein is Large ribosomal subunit protein uL13.